The primary structure comprises 199 residues: Sulfocyanin (199 aa).

The helical; Signal-anchor for type II membrane protein transmembrane segment at 7-27 threads the bilayer; it reads VLPVVVGILVVIIAVAVGVYV. Residues 79–188 enclose the Plastocyanin-like domain; it reads NFNGTSSGSL…SGMWAVLVAS (110 aa). Histidine 110, cysteine 171, histidine 176, and methionine 181 together coordinate Cu cation.

This sequence belongs to the multicopper oxidase family.

It is found in the cell membrane. In terms of biological role, the 4 redox proteins SoxE, SoxF, SoxG and SoxH probably form part of a membrane respiratory complex together with SoxM, a catalytic subunit of cytochrome oxidase. This chain is Sulfocyanin (soxE), found in Sulfolobus acidocaldarius (strain ATCC 33909 / DSM 639 / JCM 8929 / NBRC 15157 / NCIMB 11770).